A 172-amino-acid chain; its full sequence is Peroxiredoxin AHP1 (172 aa).

The Thioredoxin domain maps to 4–171 (LQPGDSFPAN…VLTVLGNQGK (168 aa)). A Glycyl lysine isopeptide (Lys-Gly) (interchain with G-Cter in URM1) cross-link involves residue Lys44. Residue Cys60 is the Cysteine sulfenic acid (-SOH) intermediate of the active site. Cys60 bears the Cysteine persulfide mark. Residues Lys63, Lys99, Lys141, Lys156, and Lys171 each participate in a glycyl lysine isopeptide (Lys-Gly) (interchain with G-Cter in URM1) cross-link.

This sequence belongs to the peroxiredoxin family. Prx5 subfamily. In terms of assembly, homodimer; disulfide-linked, upon oxidation. Conjugated to URM1, a ubiquitin-like protein, in response to oxidative stresses. The attachment of URM1 to lysine residues exclusively depends on the presence of a peroxidatic cysteine in the target protein, with low specificity for the particular residue, motif, or structural context at which urmylation can occur. The URM1-conjugation reaction is mechanistically and directly coupled to the process of cysteine persulfidation, transfering the sulfur atom of the URM1 thiocarboxyl group to redox-active cysteine residues in the target protein if it is exposed to oxidative conditions. In terms of processing, persulfidated on specific redox-active cysteine residues. Persulfidation (also called protein S-sulfhydration) may provide a molecular mechanism that enables cells to protect vulnerable cysteine residues from reactive oxygen species (ROS) under stress conditions.

It is found in the cytoplasm. It catalyses the reaction a hydroperoxide + [thioredoxin]-dithiol = an alcohol + [thioredoxin]-disulfide + H2O. Functionally, thiol-specific peroxidase that catalyzes the reduction of hydrogen peroxide and organic hydroperoxides to water and alcohols, respectively. Plays a role in cell protection against oxidative stress by detoxifying peroxides and as sensor of hydrogen peroxide-mediated signaling events. Preferentially eliminates organic peroxides rather than hydrogen peroxide. Relays alkyl hydroperoxides as a signal to the transcription factor CAD1/YAP2 by inducing the formation of intramolecular disulfide bonds in CAD1, which causes its nuclear accumulation and activation. Involved in cellular Mn(2+) homeostasis. The sequence is that of Peroxiredoxin AHP1 (AHP1) from Chaetomium thermophilum (strain DSM 1495 / CBS 144.50 / IMI 039719) (Thermochaetoides thermophila).